The following is an 861-amino-acid chain: Probable beta-glucosidase A (861 aa).

Residues 1-19 (MKLSILEAAALTAASVVSA) form the signal peptide. N-linked (GlcNAc...) asparagine glycosylation is found at N62, N212, and N253. D281 is an active-site residue. N316, N323, N355, N524, N543, N565, N669, and N713 each carry an N-linked (GlcNAc...) asparagine glycan. A disordered region spans residues 735–754 (PEGATDGSPQPRLPASGGPG).

It belongs to the glycosyl hydrolase 3 family.

It is found in the secreted. The catalysed reaction is Hydrolysis of terminal, non-reducing beta-D-glucosyl residues with release of beta-D-glucose.. The protein operates within glycan metabolism; cellulose degradation. Beta-glucosidases are one of a number of cellulolytic enzymes involved in the degradation of cellulosic biomass. Catalyzes the last step releasing glucose from the inhibitory cellobiose. In Aspergillus terreus (strain NIH 2624 / FGSC A1156), this protein is Probable beta-glucosidase A (bglA).